We begin with the raw amino-acid sequence, 318 residues long: Probable cell division protein WhiA (318 aa).

The segment at residues 276 to 310 is a DNA-binding region (H-T-H motif); the sequence is TLQELGEMVESGSISKSGINHRLRKIDQIADKIRN.

It belongs to the WhiA family.

Involved in cell division and chromosome segregation. The chain is Probable cell division protein WhiA from Exiguobacterium sibiricum (strain DSM 17290 / CCUG 55495 / CIP 109462 / JCM 13490 / 255-15).